We begin with the raw amino-acid sequence, 717 residues long: F-box only protein 42 (717 aa).

The segment covering 1 to 30 (MASSSDSEDDSVMAVDQEETALEGTMEQDE) has biased composition (acidic residues). A disordered region spans residues 1-34 (MASSSDSEDDSVMAVDQEETALEGTMEQDEDPHP). Positions 44 to 93 (NRSMSELPEEVLEYILSFLSPYQEHKTAALVCKQWYRLIKGVAHQCYHGF) constitute an F-box domain. Kelch repeat units follow at residues 132-184 (SMYV…VYKD), 186-242 (LVLF…VIGD), 244-293 (MIVF…VIDD), and 295-342 (TLLI…LWCH). The tract at residues 361-452 (RAPLSPSLNS…NLSPGTVAVG (92 aa)) is disordered. The span at 363–376 (PLSPSLNSRPSPIS) shows a compositional bias: low complexity. Phosphoserine is present on residues S365 and S373. T378 is subject to Phosphothreonine. Over residues 416–426 (QRQTPSGSREG) the composition is skewed to polar residues. A Phosphoserine modification is found at S552. The span at 570 to 595 (GPSASAALSPPLGSSPSSPGSQSLSS) shows a compositional bias: low complexity. The disordered stretch occupies residues 570 to 632 (GPSASAALSP…HHPPQSLNVG (63 aa)).

In terms of assembly, component of some SCF complex, composed of CUL1, SKP1, RBX1 and FBXO42. Interacts (via the kelch domain) with p53/TP53; interaction is direct.

Its function is as follows. Substrate-recognition component of some SCF (SKP1-CUL1-F-box protein)-type E3 ubiquitin ligase complex. Specifically recognizes p53/TP53, promoting its ubiquitination and degradation. The sequence is that of F-box only protein 42 (Fbxo42) from Mus musculus (Mouse).